The primary structure comprises 158 residues: HVA22-like protein f (158 aa).

3 helical membrane-spanning segments follow: residues 2–22 (GFII…VMLL), 41–61 (QQWL…LSVW), and 63–83 (VLAW…WLVL).

The protein belongs to the DP1 family.

It is found in the membrane. This is HVA22-like protein f (HVA22F) from Arabidopsis thaliana (Mouse-ear cress).